Consider the following 835-residue polypeptide: METSICSPENRYSHPYKPYDIQIQLMDAIYDTIDNGYKIGLFESPTGTGKTLSIICSTMTWLRDYKRENVFQPMAGLDGSDTDDSDSDDEPEWVKKAYRDTIVSRSENKMVDYEMYLEKIQNEYENNIQTAGSIKSSRPPKKKRSTAKKQELHDEDFLPEDYYSDSEVKPNADKLTVLESEISQLLDKVNGRTDEIEMTNDCPVNIYFSSRTHSQLNQFAHQLALTKFQSSFKGVEERTKYLPIGSRKQLCINEKVKSFSKNDSNINDVCVDLQKSKEGCQFLPKDYLNSSLTKKLSDLSLSKIHDIEEIADLGSNMKVCPYYSVRKGVEMTEIISLPYQILLSESTRAILNLQIEDSIVVIDEAHNLMDTITSMHSVCITIGEMNSIIKALKFYLGRFLKKLNSGNRIHLMKLIKLCQLVISFIQKSEKCNNIKVGNEINTSDIYQNSTGDMLNIHILEAFLAKSKIAYKIESYMEKVAENENEQAKTSSSNPLLYKIVQFLKCLVNPSKEGKFFWDSTNGITSIKYMLLDPSSVFKDIVSKARCVILCGGTMEPMSEFKNFLFPYVEDKKIKSFSCNHIIPPDNLKVYPVSSQNNVTLEFSFDNRNNPLMIEALGASIVRICQSVPDGVVVFFPSYKYMNHILSIWKSTDVLTQIESQKKLFEEPTSASQVQTILADYANTIKEEKKGAILFSVVGGKMSEGINFADELGRAVVMVGLPYPNAYSGEIIAKRKFIESEAIARGCSMSEAQRNSQSYYENLCMRAVNQSIGRSIRHINDYSIIYLVDCRYQSSRIQNKLSSWVRKRIETRNYNMDQIMEETRDFFMCKTIARLA.

In terms of domain architecture, Helicase ATP-binding spans Pro8–Val421. Ser44–Thr51 is a binding site for ATP. Positions Thr130–Glu167 are disordered. The segment covering Arg138–Ala147 has biased composition (basic residues). 4 residues coordinate [4Fe-4S] cluster: Cys251, Cys270, Cys280, and Cys320. Positions Asp363–His366 match the DEAH box motif.

Belongs to the DEAD box helicase family. DEAH subfamily. DDX11/CHL1 sub-subfamily. Requires [4Fe-4S] cluster as cofactor.

It localises to the nucleus. The catalysed reaction is Couples ATP hydrolysis with the unwinding of duplex DNA at the replication fork by translocating in the 5'-3' direction. This creates two antiparallel DNA single strands (ssDNA). The leading ssDNA polymer is the template for DNA polymerase III holoenzyme which synthesizes a continuous strand.. It carries out the reaction ATP + H2O = ADP + phosphate + H(+). Its function is as follows. ATP-dependent DNA helicase important for chromosome transmission and normal cell cycle progression in G(2)/M. May have a role in changing DNA topology to allow the loading of proteins involved in maintaining sister chromatid cohesion in the vicinity of the centromeres. Has a specific role in chromosome segregation during meiosis II. In Scheffersomyces stipitis (strain ATCC 58785 / CBS 6054 / NBRC 10063 / NRRL Y-11545) (Yeast), this protein is ATP-dependent DNA helicase CHL1 (CHL1).